The primary structure comprises 366 residues: Peptide chain release factor 2 (366 aa).

Q249 is subject to N5-methylglutamine.

Belongs to the prokaryotic/mitochondrial release factor family. Post-translationally, methylated by PrmC. Methylation increases the termination efficiency of RF2.

Its subcellular location is the cytoplasm. Its function is as follows. Peptide chain release factor 2 directs the termination of translation in response to the peptide chain termination codons UGA and UAA. In Petrotoga mobilis (strain DSM 10674 / SJ95), this protein is Peptide chain release factor 2.